Consider the following 149-residue polypeptide: Deoxyuridine 5'-triphosphate nucleotidohydrolase (149 aa).

Residues 68–70, N81, 85–87, and M95 contribute to the substrate site; these read RSG and LID.

It belongs to the dUTPase family. Requires Mg(2+) as cofactor.

It catalyses the reaction dUTP + H2O = dUMP + diphosphate + H(+). Its pathway is pyrimidine metabolism; dUMP biosynthesis; dUMP from dCTP (dUTP route): step 2/2. This enzyme is involved in nucleotide metabolism: it produces dUMP, the immediate precursor of thymidine nucleotides and it decreases the intracellular concentration of dUTP so that uracil cannot be incorporated into DNA. The protein is Deoxyuridine 5'-triphosphate nucleotidohydrolase of Methylibium petroleiphilum (strain ATCC BAA-1232 / LMG 22953 / PM1).